Consider the following 227-residue polypeptide: MENTSTNGEPARAEKSIGRLHVLTDFHLQQDRSHAELARLAIRGGADTIQFRQKHGGIQNKLLEARKVATVCADASTPLLIDDHLDIAQATDADGVHLGQDDFPIDAARSVLGPSPIIGGTASKPHEAAEAYEQGADYIGFGPVFPTTSKRNPKSVKGPDGLADACEAVPIPVIAIGGITHDRVRSVLEAGAHGVAVLSAVDTARNPEQATARFRAAIDGVLREADS.

4-amino-2-methyl-5-(diphosphooxymethyl)pyrimidine-binding positions include 50–54 and Asp82; that span reads QFRQK. Asp83 and Asp102 together coordinate Mg(2+). Thr121 lines the 4-amino-2-methyl-5-(diphosphooxymethyl)pyrimidine pocket. 147–149 contacts 2-[(2R,5Z)-2-carboxy-4-methylthiazol-5(2H)-ylidene]ethyl phosphate; that stretch reads TTS. Lys150 provides a ligand contact to 4-amino-2-methyl-5-(diphosphooxymethyl)pyrimidine. 2-[(2R,5Z)-2-carboxy-4-methylthiazol-5(2H)-ylidene]ethyl phosphate is bound by residues Gly178 and 198–199; that span reads LS.

The protein belongs to the thiamine-phosphate synthase family. Mg(2+) serves as cofactor.

The catalysed reaction is 2-[(2R,5Z)-2-carboxy-4-methylthiazol-5(2H)-ylidene]ethyl phosphate + 4-amino-2-methyl-5-(diphosphooxymethyl)pyrimidine + 2 H(+) = thiamine phosphate + CO2 + diphosphate. It catalyses the reaction 2-(2-carboxy-4-methylthiazol-5-yl)ethyl phosphate + 4-amino-2-methyl-5-(diphosphooxymethyl)pyrimidine + 2 H(+) = thiamine phosphate + CO2 + diphosphate. It carries out the reaction 4-methyl-5-(2-phosphooxyethyl)-thiazole + 4-amino-2-methyl-5-(diphosphooxymethyl)pyrimidine + H(+) = thiamine phosphate + diphosphate. It participates in cofactor biosynthesis; thiamine diphosphate biosynthesis; thiamine phosphate from 4-amino-2-methyl-5-diphosphomethylpyrimidine and 4-methyl-5-(2-phosphoethyl)-thiazole: step 1/1. Condenses 4-methyl-5-(beta-hydroxyethyl)thiazole monophosphate (THZ-P) and 2-methyl-4-amino-5-hydroxymethyl pyrimidine pyrophosphate (HMP-PP) to form thiamine monophosphate (TMP). The polypeptide is Thiamine-phosphate synthase (Salinibacter ruber (strain DSM 13855 / M31)).